The chain runs to 30 residues: Cytochrome c oxidase subunit 5C (30 aa).

Residues 15 to 30 traverse the membrane as a helical segment; the sequence is VVKELVIXXXLGLXAG.

It belongs to the cytochrome c oxidase subunit 5C family.

Its subcellular location is the mitochondrion inner membrane. In terms of biological role, this protein is one of the nuclear-coded polypeptide chains of cytochrome c oxidase, the terminal oxidase in mitochondrial electron transport. This is Cytochrome c oxidase subunit 5C (COX5C) from Solanum tuberosum (Potato).